The primary structure comprises 96 residues: ATP synthase subunit e, mitochondrial (96 aa).

Ser-2 is modified (N-acetylserine).

This sequence belongs to the ATPase e subunit family. As to quaternary structure, F-type ATPases have 2 components, CF(1) - the catalytic core - and CF(0) - the membrane proton channel. In yeast, the dimeric form of ATP synthase consists of 17 polypeptides: alpha, beta, gamma, delta, epsilon, 4 (B), 5 (OSCP), 6 (A), 8, 9 (C), d, E (Tim11), f, g, h, i/j and k.

It is found in the mitochondrion. It localises to the mitochondrion inner membrane. In terms of biological role, mitochondrial membrane ATP synthase (F(1)F(0) ATP synthase or Complex V) produces ATP from ADP in the presence of a proton gradient across the membrane which is generated by electron transport complexes of the respiratory chain. F-type ATPases consist of two structural domains, F(1) - containing the extramembraneous catalytic core, and F(0) - containing the membrane proton channel, linked together by a central stalk and a peripheral stalk. During catalysis, ATP synthesis in the catalytic domain of F(1) is coupled via a rotary mechanism of the central stalk subunits to proton translocation. Part of the complex F(0) domain. Minor subunit located with subunit a in the membrane. The chain is ATP synthase subunit e, mitochondrial (TIM11) from Saccharomyces cerevisiae (strain ATCC 204508 / S288c) (Baker's yeast).